The following is a 692-amino-acid chain: Translation initiation factor IF-2 (692 aa).

Positions 194 to 363 (PRPPIVTVMG…LLVAEMEDLK (170 aa)) constitute a tr-type G domain. Residues 203–210 (GHVDHGKT) are G1. 203–210 (GHVDHGKT) provides a ligand contact to GTP. The G2 stretch occupies residues 228 to 232 (GITQH). The interval 249–252 (DTPG) is G3. Residues 249–253 (DTPGH) and 303–306 (NKID) each bind GTP. Residues 303-306 (NKID) are G4. A G5 region spans residues 339–341 (SAK).

The protein belongs to the TRAFAC class translation factor GTPase superfamily. Classic translation factor GTPase family. IF-2 subfamily.

It localises to the cytoplasm. In terms of biological role, one of the essential components for the initiation of protein synthesis. Protects formylmethionyl-tRNA from spontaneous hydrolysis and promotes its binding to the 30S ribosomal subunits. Also involved in the hydrolysis of GTP during the formation of the 70S ribosomal complex. This Thermoanaerobacter sp. (strain X514) protein is Translation initiation factor IF-2.